The following is a 479-amino-acid chain: Chromosomal replication initiator protein DnaA (479 aa).

The tract at residues 1–74 is domain I, interacts with DnaA modulators; it reads MFSGVVMAWQ…RSLTGVDSSI (74 aa). The interval 74 to 142 is domain II; sequence ITDVRFLEKK…SVPKNNASIR (69 aa). The interval 143-360 is domain III, AAA+ region; the sequence is ALHPRYTFDE…SAITAIGARA (218 aa). 4 residues coordinate ATP: G187, G189, K190, and S191. The domain IV, binds dsDNA stretch occupies residues 361-479; the sequence is RLMGGYIDMN…NLLSDKVKQI (119 aa).

This sequence belongs to the DnaA family. Oligomerizes as a right-handed, spiral filament on DNA at oriC.

Its subcellular location is the cytoplasm. In terms of biological role, plays an essential role in the initiation and regulation of chromosomal replication. ATP-DnaA binds to the origin of replication (oriC) to initiate formation of the DNA replication initiation complex once per cell cycle. Binds the DnaA box (a 9 base pair repeat at the origin) and separates the double-stranded (ds)DNA. Forms a right-handed helical filament on oriC DNA; dsDNA binds to the exterior of the filament while single-stranded (ss)DNA is stabiized in the filament's interior. The ATP-DnaA-oriC complex binds and stabilizes one strand of the AT-rich DNA unwinding element (DUE), permitting loading of DNA polymerase. After initiation quickly degrades to an ADP-DnaA complex that is not apt for DNA replication. Binds acidic phospholipids. The chain is Chromosomal replication initiator protein DnaA from Desulfotalea psychrophila (strain LSv54 / DSM 12343).